An 800-amino-acid chain; its full sequence is DNA topoisomerase 4 subunit A (800 aa).

Positions 31–495 (LPDVRDGLKP…EIEEIKIDKE (465 aa)) constitute a Topo IIA-type catalytic domain. Catalysis depends on tyrosine 119, which acts as the O-(5'-phospho-DNA)-tyrosine intermediate.

It belongs to the type II topoisomerase GyrA/ParC subunit family. ParC type 2 subfamily. As to quaternary structure, heterotetramer composed of ParC and ParE.

The protein resides in the cell membrane. The catalysed reaction is ATP-dependent breakage, passage and rejoining of double-stranded DNA.. Topoisomerase IV is essential for chromosome segregation. It relaxes supercoiled DNA. Performs the decatenation events required during the replication of a circular DNA molecule. This is DNA topoisomerase 4 subunit A from Staphylococcus aureus (strain MRSA252).